The primary structure comprises 1029 residues: MADKTPGGSQKASSKTRSSDVHSSGSSDAHMDASGPSDSDMPSRTRPKSPRKHNYRNESARESLCDSPHQNLSRPLLENKLKAFSIGKMSTAKRTLSKKEQEELKKKEDEKAAAEIYEEFLAAFEGSDGNKVKTFVRGGVVNAAKEEHETDEKRGKIYKPSSRFADQKNPPNQSSNERPPSLLVIETKKPPLKKGEKEKKKSNLELFKEELKQIQEERDERHKTKGRLSRFEPPQSDSDGQRRSMDAPSRRNRSSGVLDDYAPGSHDVGDPSTTNLYLGNINPQMNEEMLCQEFGRFGPLASVKIMWPRTDEERARERNCGFVAFMNRRDAERALKNLNGKMIMSFEMKLGWGKAVPIPPHPIYIPPSMMEHTLPPPPSGLPFNAQPRERLKNPNAPMLPPPKNKEDFEKTLSQAIVKVVIPTERNLLALIHRMIEFVVREGPMFEAMIMNREINNPMFRFLFENQTPAHVYYRWKLYSILQGDSPTKWRTEDFRMFKNGSFWRPPPLNPYLHGMSEEQETEAFVEEPSKKGALKEEQRDKLEEILRGLTPRKNDIGDAMVFCLNNAEAAEEIVDCITESLSILKTPLPKKIARLYLVSDVLYNSSAKVANASYYRKFFETKLCQIFSDLNATYRTIQGHLQSENFKQRVMTCFRAWEDWAIYPEPFLIKLQNIFLGLVNIIEEKETEDVPDDLDGAPIEEELDGAPLEDVDGIPIDATPIDDLDGVPIKSLDDDLDGVPLDATEDSKKNEPIFKVAPSKWEAVDESELEAQAVTTSKWELFDQHEESEEEENQNQEEESEDEEDTQSSKSEEHHLYSNPIKEEMTESKFSKYSEMSEEKRAKLREIELKVMKFQDELESGKRPKKPGQSFQEQVEHYRDKLLQREKEKELERERERDKKDKEKLESRSKDKKEKDECTPTRKERKRRHSTSPSPSRSSSGRRVKSPSPKSERSERSERSHKESSRSRSSHKDSPRDVSKKAKRSPSGSRTPKRSRRSRSRSPKKSGKKSRSQSRSPHRSHKKSKKNKH.

Disordered stretches follow at residues 1-111 (MADK…EDEK) and 141-274 (VNAA…PSTT). Residue Ala2 is modified to N-acetylalanine. The segment covering 7 to 16 (GGSQKASSKT) has biased composition (polar residues). Over residues 45–54 (TRPKSPRKHN) the composition is skewed to basic residues. A compositionally biased stretch (basic and acidic residues) spans 55 to 64 (YRNESARESL). Ser67 is subject to Phosphoserine. Lys80 is covalently cross-linked (Glycyl lysine isopeptide (Lys-Gly) (interchain with G-Cter in SUMO2)). Residues 92 to 121 (AKRTLSKKEQEELKKKEDEKAAAEIYEEFL) are a coiled coil. Basic and acidic residues-rich tracts occupy residues 97–111 (SKKE…EDEK) and 144–155 (AKEEHETDEKRG). Glycyl lysine isopeptide (Lys-Gly) (interchain with G-Cter in SUMO2) cross-links involve residues Lys145 and Lys168. Over residues 169-178 (NPPNQSSNER) the composition is skewed to polar residues. Basic and acidic residues predominate over residues 186–222 (ETKKPPLKKGEKEKKKSNLELFKEELKQIQEERDERH). Residues 192–232 (LKKGEKEKKKSNLELFKEELKQIQEERDERHKTKGRLSRFE) adopt a coiled-coil conformation. A Phosphoserine modification is found at Ser202. Lys208 participates in a covalent cross-link: Glycyl lysine isopeptide (Lys-Gly) (interchain with G-Cter in SUMO2). Ser236 bears the Phosphoserine mark. Over residues 239-249 (DGQRRSMDAPS) the composition is skewed to basic and acidic residues. The RRM domain occupies 274–355 (TNLYLGNINP…FEMKLGWGKA (82 aa)). An SURP motif repeat occupies 430-473 (LIHRMIEFVVREGPMFEAMIMNREINNPMFRFLFENQTPAHVYY). Phosphoserine is present on Ser485. A CID domain is found at 534–679 (LKEEQRDKLE…KLQNIFLGLV (146 aa)). Thr719 carries the post-translational modification Phosphothreonine. Glycyl lysine isopeptide (Lys-Gly) (interchain with G-Cter in SUMO2) cross-links involve residues Lys748 and Lys749. An N6-acetyllysine; alternate modification is found at Lys760. Residue Lys760 forms a Glycyl lysine isopeptide (Lys-Gly) (interchain with G-Cter in SUMO2); alternate linkage. 2 disordered regions span residues 778 to 841 (KWEL…EEKR) and 855 to 1029 (QDEL…KNKH). Residues 786–806 (EESEEEENQNQEEESEDEEDT) show a composition bias toward acidic residues. Phosphoserine occurs at positions 788, 800, and 811. Composition is skewed to basic and acidic residues over residues 810–841 (KSEE…EEKR) and 874–922 (QVEH…TPTR). Residues Lys822, Lys829, and Lys832 each participate in a glycyl lysine isopeptide (Lys-Gly) (interchain with G-Cter in SUMO2) cross-link. Positions 837-915 (SEEKRAKLRE…ESRSKDKKEK (79 aa)) form a coiled coil. Thr931 is subject to Phosphothreonine. Phosphoserine is present on residues Ser946 and Ser948. Residues 950–980 (KSERSERSERSHKESSRSRSSHKDSPRDVSK) are compositionally biased toward basic and acidic residues. The segment covering 991–1029 (TPKRSRRSRSRSPKKSGKKSRSQSRSPHRSHKKSKKNKH) has biased composition (basic residues).

The protein belongs to the splicing factor SR family. Interacts with ERBB4.

Its subcellular location is the nucleus. The polypeptide is U2 snRNP-associated SURP motif-containing protein (U2SURP) (Homo sapiens (Human)).